The sequence spans 46 residues: Large ribosomal subunit protein bL34 (46 aa).

The tract at residues 25-46 is disordered; it reads TASGRQVLRRRRAKGRYRLAVS. Basic residues predominate over residues 31 to 46; it reads VLRRRRAKGRYRLAVS.

It belongs to the bacterial ribosomal protein bL34 family.

This chain is Large ribosomal subunit protein bL34, found in Synechococcus sp. (strain JA-3-3Ab) (Cyanobacteria bacterium Yellowstone A-Prime).